The primary structure comprises 683 residues: ATP-dependent zinc metalloprotease FtsH 2 (683 aa).

Positions 1-12 are enriched in polar residues; the sequence is MADQTSQNDNQN. Positions 1–21 are disordered; it reads MADQTSQNDNQNGSGLPGGGP. At 1-28 the chain is on the cytoplasmic side; the sequence is MADQTSQNDNQNGSGLPGGGPSGTGRGR. Residues 29–49 form a helical membrane-spanning segment; it reads LIIWVIAGTLLALWAYSYWGM. Residues 50 to 136 lie on the Periplasmic side of the membrane; that stretch reads GASGGERISY…VTKPESSFPW (87 aa). A helical transmembrane segment spans residues 137–157; that stretch reads GLVIMGLLPVLLLFGVGYIFL. The Cytoplasmic portion of the chain corresponds to 158 to 683; it reads RRMQSQGQGL…ASGSADASGS (526 aa). 228–235 is an ATP binding site; it reads GPPGTGKT. A Zn(2+)-binding site is contributed by His450. Glu451 is a catalytic residue. Residues His454 and Asp526 each coordinate Zn(2+). Residues 627–683 form a disordered region; sequence VNGDTDEIGHMPTTNGAAASEENGSADDHEPDEATVIEEDGESGEGRASGSADASGS. Positions 655-669 are enriched in acidic residues; the sequence is HEPDEATVIEEDGES. Residues 672-683 show a composition bias toward low complexity; sequence GRASGSADASGS.

This sequence in the central section; belongs to the AAA ATPase family. It in the C-terminal section; belongs to the peptidase M41 family. As to quaternary structure, homohexamer. Zn(2+) serves as cofactor.

The protein localises to the cell inner membrane. Its function is as follows. Acts as a processive, ATP-dependent zinc metallopeptidase for both cytoplasmic and membrane proteins. Plays a role in the quality control of integral membrane proteins. This Salinibacter ruber (strain M8) protein is ATP-dependent zinc metalloprotease FtsH 2.